The chain runs to 97 residues: Large ribosomal subunit protein uL23 (97 aa).

Belongs to the universal ribosomal protein uL23 family. As to quaternary structure, part of the 50S ribosomal subunit. Contacts protein L29, and trigger factor when it is bound to the ribosome.

One of the early assembly proteins it binds 23S rRNA. One of the proteins that surrounds the polypeptide exit tunnel on the outside of the ribosome. Forms the main docking site for trigger factor binding to the ribosome. The chain is Large ribosomal subunit protein uL23 from Limosilactobacillus fermentum (strain NBRC 3956 / LMG 18251) (Lactobacillus fermentum).